The chain runs to 409 residues: MKIIAADVFVTSPSRNFVTLRITTEDGVTGIGDATLNGRELAVAAYLKEHVAQLLIGKDPHRIEDTWQFLYRSSYWRRGPVTMAAIAAVDMALWDIKGKVAGMPVYQLLGGASRNGLRAYGHASGADIPSLFDSVREHLELGYKSIRIQTAVPGIKAVYGVAAQAQASGERYDYEPAGRGAFPVEEDWDTRAYLRHLPSVFEAVRNEFGPEIPLLHDGHHRMTPIQAAKLGKALEPYDLFWLEDCTPAENQEALRLVRQHTTTPLAIGEIFNTVYDYQTIIKEQLIDYVRAASTHFGGISPLKKVMDFAAQYQIKSGFHGPTDISPVGFAAQLHVGLAIHNYGIQEYMQHSDKTNEVFHQSMTFKDGYLHPGDEPGIGVEFNEEAAAAFPYQQAYLPYNRLVDGTVHDW.

Position 217 (Asp-217) interacts with Mg(2+). Residue His-219 participates in D-arabinonate binding. Positions 243 and 269 each coordinate Mg(2+). 4 residues coordinate D-arabinonate: Glu-269, Arg-290, His-319, and Glu-346.

It belongs to the mandelate racemase/muconate lactonizing enzyme family. GalD subfamily.

Functionally, has no detectable activity with D-mannonate and with a panel of 70 other acid sugars (in vitro), in spite of the conservation of the residues that are expected to be important for catalytic activity and cofactor binding. May have evolved a divergent function. This Pseudarthrobacter chlorophenolicus (strain ATCC 700700 / DSM 12829 / CIP 107037 / JCM 12360 / KCTC 9906 / NCIMB 13794 / A6) (Arthrobacter chlorophenolicus) protein is D-galactonate dehydratase family member Achl_0790.